A 984-amino-acid polypeptide reads, in one-letter code: Translation initiation factor IF-2 (984 aa).

Disordered regions lie at residues 92–267 (KKRT…ERRR) and 280–392 (MNAP…EEHV). Positions 104–123 (PATPEVQPVAEAPAAAPAAP) are enriched in low complexity. Residues 124–177 (RIDEAELARREEEARRQAELIRRQEEELAEKRRLREEAEAREREQAEKAERAEQ) are compositionally biased toward basic and acidic residues. The span at 193-235 (DAAAAAPAKEAAKPAAAPVAAAAAAAEQQAADTKLAAQTAATQ) shows a compositional bias: low complexity. 2 stretches are compositionally biased toward basic and acidic residues: residues 236–267 (AKED…ERRR) and 291–302 (KAPEKPQPEKAA). Low complexity predominate over residues 310–335 (PAAPAARPGAPAAPGAAAAPGAAGAG). A compositionally biased stretch (basic and acidic residues) spans 351 to 361 (PAKKKEIKTRG). Residues 363 to 375 (ASGGVGRGNWRGG) are compositionally biased toward gly residues. The span at 381 to 392 (GSNDRGGHEEHV) shows a compositional bias: basic and acidic residues. Residues 484–653 (PRAPVVTVMG…LLQAEVLELK (170 aa)) form the tr-type G domain. Residues 493–500 (GHVDHGKT) are G1. Residue 493–500 (GHVDHGKT) participates in GTP binding. Residues 518–522 (GITQH) form a G2 region. Positions 539-542 (DTPG) are G3. Residues 539-543 (DTPGH) and 593-596 (NKID) each bind GTP. Positions 593–596 (NKID) are G4. The segment at 629–631 (SAK) is G5.

It belongs to the TRAFAC class translation factor GTPase superfamily. Classic translation factor GTPase family. IF-2 subfamily.

The protein localises to the cytoplasm. Functionally, one of the essential components for the initiation of protein synthesis. Protects formylmethionyl-tRNA from spontaneous hydrolysis and promotes its binding to the 30S ribosomal subunits. Also involved in the hydrolysis of GTP during the formation of the 70S ribosomal complex. The polypeptide is Translation initiation factor IF-2 (Variovorax paradoxus (strain S110)).